Reading from the N-terminus, the 302-residue chain is Cyclin-C (302 aa).

The Cyclin N-terminal domain occupies Asn-46 to Glu-152. Residues Leu-281 to Leu-302 are disordered. The span at Gln-292–Leu-302 shows a compositional bias: low complexity.

This sequence belongs to the cyclin family. Cyclin C subfamily. In terms of assembly, component of the Mediator complex.

The protein resides in the nucleus. Functionally, component of the Mediator complex, a coactivator involved in regulated gene transcription of nearly all RNA polymerase II-dependent genes. Mediator functions as a bridge to convey information from gene-specific regulatory proteins to the basal RNA polymerase II transcription machinery. Mediator is recruited to promoters by direct interactions with regulatory proteins and serves as a scaffold for the assembly of a functional preinitiation complex with RNA polymerase II and the general transcription factors. Binds to and activates cyclin-dependent kinase cdk-8 that phosphorylates the CTD (C-terminal domain) of the large subunit of RNA polymerase II (RNAp II), which may inhibit the formation of a transcription initiation complex. The chain is Cyclin-C (cic-1) from Caenorhabditis elegans.